Reading from the N-terminus, the 301-residue chain is MFNVQFDIFNFSNNITFLTLLISLISYWLGLIFKKIKNVFYIGYGSTILACITITIILGTRWIESGYFPLSNLYESLMFLTWGLLFSAIYLEYKTNLYLIGAIVSPISLFIVSFSTLSLPQDMQKAAPLVPALKSNWLMMHVSVMMLSYSTLIIGSLLAILYLVLIKAQQKKHSLKDFAFANLEFTFPKSTNSTNFNLLETLDNLSYRTIGFGFPLLTIGIIAGAVWANEAWGTYWSWDPKETWALITWLVFAAYLHARITKSWTGERPAYLAALGFVVVWICYLGVNFLGKGLHSYGWLN.

The next 8 helical transmembrane spans lie at 13–33 (NNIT…GLIF), 39–59 (VFYI…IILG), 73–93 (LYES…YLEY), 97–117 (LYLI…FSTL), 146–166 (MLSY…LVLI), 209–229 (TIGF…VWAN), 236–256 (WSWD…AAYL), and 270–290 (AYLA…VNFL).

The protein belongs to the CcmF/CycK/Ccl1/NrfE/CcsA family. May interact with Ccs1.

The protein localises to the plastid. It is found in the chloroplast thylakoid membrane. Its function is as follows. Required during biogenesis of c-type cytochromes (cytochrome c6 and cytochrome f) at the step of heme attachment. In Guillardia theta (Cryptophyte), this protein is Cytochrome c biogenesis protein CcsA.